The primary structure comprises 170 residues: Myosin regulatory light chain 11 (170 aa).

Residue alanine 2 is modified to N,N,N-trimethylalanine. Residues serine 16 and serine 17 each carry the phosphoserine modification. Residues threonine 26 and threonine 36 each carry the phosphothreonine modification. Residues 26–61 form the EF-hand 1 domain; it reads TQIQEFKEAFTVIDQNRDGIIDKEDLRDTFAAMGRL. Ca(2+) is bound by residues aspartate 39, asparagine 41, aspartate 43, and aspartate 50. At serine 76 the chain carries Phosphoserine. EF-hand domains follow at residues 96 to 131 and 132 to 167; these read DPED…QCDR and FSQE…GDAK. At threonine 102 the chain carries Phosphothreonine.

In terms of assembly, myosin is a hexamer of 2 heavy chains and 4 light chains. In terms of processing, n,N,N-trimethylalanine found in this myosin light chain would not have been detected in the N-terminal tryptic peptide in PubMed:863872 and PubMed:352892 because it would remain trimethylated and ninhydrin negative after hydrolysis.

In terms of biological role, myosin regulatory subunit that plays an essential role to maintain muscle integrity during early development. Plays a role in muscle contraction. In Oryctolagus cuniculus (Rabbit), this protein is Myosin regulatory light chain 11 (MYL11).